We begin with the raw amino-acid sequence, 267 residues long: Undecaprenyl-diphosphatase (267 aa).

A run of 7 helical transmembrane segments spans residues 4-24 (LYAL…ISST), 41-61 (FWKS…IFVF), 69-89 (LDIW…GLFV), 96-116 (LFNG…FILI), 173-193 (AAEF…AYSI), 207-227 (IPLG…IKFF), and 239-259 (FGIY…SGIL).

The protein belongs to the UppP family.

It is found in the cell inner membrane. The catalysed reaction is di-trans,octa-cis-undecaprenyl diphosphate + H2O = di-trans,octa-cis-undecaprenyl phosphate + phosphate + H(+). Functionally, catalyzes the dephosphorylation of undecaprenyl diphosphate (UPP). Confers resistance to bacitracin. This is Undecaprenyl-diphosphatase from Campylobacter jejuni subsp. jejuni serotype O:2 (strain ATCC 700819 / NCTC 11168).